An 837-amino-acid polypeptide reads, in one-letter code: Protein translocase subunit SecA (837 aa).

Residues Gln-85, 103 to 107 (GEGKT), and Asp-493 each bind ATP. The Zn(2+) site is built by Cys-821, Cys-823, Cys-832, and His-833.

The protein belongs to the SecA family. In terms of assembly, monomer and homodimer. Part of the essential Sec protein translocation apparatus which comprises SecA, SecYEG and auxiliary proteins SecDF. Other proteins may also be involved. Zn(2+) serves as cofactor.

It localises to the cell membrane. The protein resides in the cytoplasm. The enzyme catalyses ATP + H2O + cellular proteinSide 1 = ADP + phosphate + cellular proteinSide 2.. Functionally, part of the Sec protein translocase complex. Interacts with the SecYEG preprotein conducting channel. Has a central role in coupling the hydrolysis of ATP to the transfer of proteins into and across the cell membrane, serving as an ATP-driven molecular motor driving the stepwise translocation of polypeptide chains across the membrane. This is Protein translocase subunit SecA from Streptococcus pneumoniae (strain P1031).